The chain runs to 561 residues: Corneodesmosin (561 aa).

Positions 1–32 (MGSSRAPRMGSVGGHGLMALLMAGLILPGILA) are cleaved as a signal peptide. Disordered stretches follow at residues 41–275 (PCKD…HTVS), 415–466 (GSVS…SSSL), and 536–561 (PLGP…LEKS). Residues 61-99 (GSNSISSQGGSSSFSSQGGSSSFSSHGGSSSSQGSSSGS) are compositionally biased toward low complexity. The span at 116-127 (GSGGSRPGGSGS) shows a compositional bias: gly residues. 2 stretches are compositionally biased toward low complexity: residues 128-207 (QSGS…SSGS) and 224-248 (TSGM…PCSS). Residues 415 to 430 (GSVSSKGPCSGTRIQI) are compositionally biased toward polar residues. Low complexity predominate over residues 431–466 (TSSSSSTSYHPCSGGPSQGPCSSPGTGSISGGSSSL).

The protein localises to the secreted. Its function is as follows. Important for the epidermal barrier integrity. The sequence is that of Corneodesmosin (Cdsn) from Mus musculus (Mouse).